The chain runs to 873 residues: Outer membrane usher protein FimC (873 aa).

Residues 1 to 15 form the signal peptide; the sequence is MKQIPLILAMSLAFA. An intrachain disulfide couples C815 to C838.

This sequence belongs to the fimbrial export usher family.

The protein localises to the cell outer membrane. In terms of biological role, probable porin-like protein necessary for the assembly of a pilin-type protein. This Bordetella pertussis (strain Tohama I / ATCC BAA-589 / NCTC 13251) protein is Outer membrane usher protein FimC (fimC).